Consider the following 146-residue polypeptide: Large ribosomal subunit protein uL15 (146 aa).

Positions 1 to 51 (MKLHELQPAAGSRKVRNRVGRGTSSGNGKTSGRGQKGQKARSGGGVRLGFE) are disordered. Composition is skewed to gly residues over residues 23–35 (TSSG…GRGQ) and 42–51 (SGGGVRLGFE).

This sequence belongs to the universal ribosomal protein uL15 family. In terms of assembly, part of the 50S ribosomal subunit.

Its function is as follows. Binds to the 23S rRNA. This Streptococcus sanguinis (strain SK36) protein is Large ribosomal subunit protein uL15.